The chain runs to 392 residues: Phosphoglycerate kinase (392 aa).

Residues 21–23, R36, 59–62, R114, and R147 contribute to the substrate site; these read DLN and HLGR. ATP contacts are provided by residues K198, E320, and 346–349; that span reads GGDT.

The protein belongs to the phosphoglycerate kinase family. As to quaternary structure, monomer.

Its subcellular location is the cytoplasm. It carries out the reaction (2R)-3-phosphoglycerate + ATP = (2R)-3-phospho-glyceroyl phosphate + ADP. The protein operates within carbohydrate degradation; glycolysis; pyruvate from D-glyceraldehyde 3-phosphate: step 2/5. The protein is Phosphoglycerate kinase of Nitrosomonas europaea (strain ATCC 19718 / CIP 103999 / KCTC 2705 / NBRC 14298).